A 251-amino-acid polypeptide reads, in one-letter code: Small ribosomal subunit protein uS2 (251 aa).

The protein belongs to the universal ribosomal protein uS2 family.

The chain is Small ribosomal subunit protein uS2 from Synechococcus elongatus (strain ATCC 33912 / PCC 7942 / FACHB-805) (Anacystis nidulans R2).